Reading from the N-terminus, the 85-residue chain is Alpha-insect toxin Bot14 (85 aa).

Residues 1 to 18 form the signal peptide; the sequence is MSSLMISTAMKGKAPYRQ. Residues 20-84 form the LCN-type CS-alpha/beta domain; the sequence is RDGYIAQPHN…GIIVHGEKCH (65 aa). Disulfide bonds link Cys-30–Cys-83, Cys-34–Cys-55, Cys-41–Cys-65, and Cys-45–Cys-67.

This sequence belongs to the long (4 C-C) scorpion toxin superfamily. Sodium channel inhibitor family. Alpha subfamily. As to expression, expressed by the venom gland.

The protein resides in the secreted. In terms of biological role, alpha toxins bind voltage-independently at site-3 of sodium channels (Nav) and inhibit the inactivation of the activated channels, thereby blocking neuronal transmission. This toxin is active only on insects. In Buthus occitanus tunetanus (Common European scorpion), this protein is Alpha-insect toxin Bot14.